Here is a 75-residue protein sequence, read N- to C-terminus: Salivary glue protein Sgs-8 (75 aa).

The N-terminal stretch at 1–24 (MKLLVVAVIACIMLIGFADPASGC) is a signal peptide.

In Drosophila melanogaster (Fruit fly), this protein is Salivary glue protein Sgs-8 (Sgs8).